The sequence spans 325 residues: DNA-directed RNA polymerase subunit alpha (325 aa).

Residues 1 to 231 (MQTSLLKPKI…DQLSVFAALE (231 aa)) are alpha N-terminal domain (alpha-NTD). The segment at 246-325 (IDPILLRPVD…ENWPPAGLDK (80 aa)) is alpha C-terminal domain (alpha-CTD).

Belongs to the RNA polymerase alpha chain family. Homodimer. The RNAP catalytic core consists of 2 alpha, 1 beta, 1 beta' and 1 omega subunit. When a sigma factor is associated with the core the holoenzyme is formed, which can initiate transcription.

It carries out the reaction RNA(n) + a ribonucleoside 5'-triphosphate = RNA(n+1) + diphosphate. Functionally, DNA-dependent RNA polymerase catalyzes the transcription of DNA into RNA using the four ribonucleoside triphosphates as substrates. The protein is DNA-directed RNA polymerase subunit alpha of Burkholderia mallei (strain NCTC 10247).